The chain runs to 61 residues: MAKKSMIAKQKRTPKFKVRAYTRCERCGRPHSVYRKFKLCRICFRELAYKGQLPGIKKASW.

Zn(2+)-binding residues include cysteine 24, cysteine 27, cysteine 40, and cysteine 43.

The protein belongs to the universal ribosomal protein uS14 family. Zinc-binding uS14 subfamily. In terms of assembly, part of the 30S ribosomal subunit. Contacts proteins S3 and S10. Requires Zn(2+) as cofactor.

Binds 16S rRNA, required for the assembly of 30S particles and may also be responsible for determining the conformation of the 16S rRNA at the A site. The sequence is that of Small ribosomal subunit protein uS14 from Geobacillus thermodenitrificans (strain NG80-2).